Here is a 349-residue protein sequence, read N- to C-terminus: ATPase GET3 (349 aa).

26–33 (KGGVGKTT) serves as a coordination point for ATP. The active site involves D57. The ATP site is built by E243 and N270. 2 residues coordinate Zn(2+): C280 and C283.

It belongs to the arsA ATPase family. Homodimer. Component of the Golgi to ER traffic (GET) complex, which is composed of GET1, GET2 and GET3. Within the complex, GET1 and GET2 form a heterotetramer which is stabilized by phosphatidylinositol binding and which binds to the GET3 homodimer. Interacts with the chloride channel protein GEF1.

It is found in the cytoplasm. The protein localises to the endoplasmic reticulum. The protein resides in the golgi apparatus. Its function is as follows. ATPase required for the post-translational delivery of tail-anchored (TA) proteins to the endoplasmic reticulum. Recognizes and selectively binds the transmembrane domain of TA proteins in the cytosol. This complex then targets to the endoplasmic reticulum by membrane-bound receptors GET1 and GET2, where the tail-anchored protein is released for insertion. This process is regulated by ATP binding and hydrolysis. ATP binding drives the homodimer towards the closed dimer state, facilitating recognition of newly synthesized TA membrane proteins. ATP hydrolysis is required for insertion. Subsequently, the homodimer reverts towards the open dimer state, lowering its affinity for the GET1-GET2 receptor, and returning it to the cytosol to initiate a new round of targeting. Cooperates with the HDEL receptor ERD2 to mediate the ATP-dependent retrieval of resident ER proteins that contain a C-terminal H-D-E-L retention signal from the Golgi to the ER. Involved in low-level resistance to the oxyanions arsenite and arsenate, and in heat tolerance. This Clavispora lusitaniae (strain ATCC 42720) (Yeast) protein is ATPase GET3.